Here is a 62-residue protein sequence, read N- to C-terminus: Large ribosomal subunit protein bL28 (62 aa).

Belongs to the bacterial ribosomal protein bL28 family.

This chain is Large ribosomal subunit protein bL28, found in Streptococcus mutans serotype c (strain ATCC 700610 / UA159).